Reading from the N-terminus, the 62-residue chain is Large ribosomal subunit protein bL33 (62 aa).

Belongs to the bacterial ribosomal protein bL33 family.

In Acaryochloris marina (strain MBIC 11017), this protein is Large ribosomal subunit protein bL33.